Consider the following 246-residue polypeptide: Short chain dehydrogenase/reductase dmxR12 (246 aa).

Residues I15, S34, K125, and K164 each contribute to the NADP(+) site. The Lowers pKa of active site Tyr role is filled by K164.

This sequence belongs to the short-chain dehydrogenases/reductases (SDR) family.

The protein operates within secondary metabolite biosynthesis. In terms of biological role, short chain dehydrogenase/reductase; part of the gene cluster that mediates the biosynthesis of the dimeric xanthones cryptosporioptides. The pathway begins with the synthesis of atrochrysone thioester by the polyketide synthase dmx-nrPKS. The atrochrysone carboxyl ACP thioesterase dmxR1 then breaks the thioester bond and releases the atrochrysone carboxylic acid from dmx-nrPKS. Atrochrysone carboxylic acid is decarboxylated by the decarboxylase dmxR15, and oxidized by the anthrone oxygenase dmxR16 to yield emodin. Emodin is then reduced to emodin hydroquinone by the oxidoreductase dmxR7. A-ring reduction by the short chain dehydrogenase dmxR18, dehydration by the scytalone dehydratase-like protein dmxR17 and probable spontaneous re-oxidation, results in overall deoxygenation to chrysophanol. Baeyer-Villiger oxidation by the Baeyer-Villiger monooxygenase (BVMO) dmxR6 then yields monodictylactone in equilibrium with monodictyphenone. In the case of the cryptosporioptides biosynthesis, monodictylactone is reduced at C-12 to an alcohol (by the short chain dehydrogenases dmxR12 or dmxR8) and hydroxylated at C-5 by dmxR9, yielding the electron-rich aromatic which could eliminate H(2)O to form the ortho-quinonemethide, followed by tautomerisation to paraquinone and complete the formal reduction to produce the 10-methylgroup. Conjugate addition of C-4a-OH to the resulting paraquinone by the monooxygenase dmxR10 then gives cyclohexadienone, which is then reduced at C-5 by the short chain dehydrogenase dmxR3 to give the dihydroxanthone. The 6,7-epoxide in the cryptosporioptides could be introduced by the cytochrome P450 monooxygenase dmxL3. The highly reducing PKS dmxL2 manufactures butyrate, which is further carboxylated by dmxL1 to form ethylmalonate. It is not yet clear whether the carboxylation occurs while the butyrate is attached to the ACP of dmxL2, but this unusual fungal metabolite could then be esterified to O-5 by the O-acetyltransferase dmxR13. Finally, dimerization performed by dmxR5 gives the observed dimers cryptosporioptides A, B and C as the final products of the pathway. The sequence is that of Short chain dehydrogenase/reductase dmxR12 from Cryptosporiopsis sp. (strain 8999).